Reading from the N-terminus, the 325-residue chain is 26S proteasome non-ATPase regulatory subunit 7 (325 aa).

The region spanning 8 to 142 (TIVHPTVLLS…TKSYVTVEEI (135 aa)) is the MPN domain. Positions 285–325 (KKADIINSTPPTTATSPSVADKGKEKEQNAFNGADKPSKQA) are disordered. Positions 292-302 (STPPTTATSPS) are enriched in low complexity.

This sequence belongs to the peptidase M67A family.

Acts as a regulatory subunit of the 26S proteasome which is involved in the ATP-dependent degradation of ubiquitinated proteins. The polypeptide is 26S proteasome non-ATPase regulatory subunit 7 (psmD7) (Dictyostelium discoideum (Social amoeba)).